The following is a 275-amino-acid chain: Octanoyl-[GcvH]:protein N-octanoyltransferase (275 aa).

Positions 42-246 constitute a BPL/LPL catalytic domain; that stretch reads GQSQPVVRLW…ALQAFGSRLE (205 aa). The Acyl-thioester intermediate role is filled by Cys145.

Belongs to the octanoyltransferase LipL family.

The enzyme catalyses N(6)-octanoyl-L-lysyl-[glycine-cleavage complex H protein] + L-lysyl-[lipoyl-carrier protein] = N(6)-octanoyl-L-lysyl-[lipoyl-carrier protein] + L-lysyl-[glycine-cleavage complex H protein]. Its pathway is protein modification; protein lipoylation via endogenous pathway; protein N(6)-(lipoyl)lysine from octanoyl-[acyl-carrier-protein]. Functionally, catalyzes the amidotransfer (transamidation) of the octanoyl moiety from octanoyl-GcvH to the lipoyl domain of the E2 subunit of lipoate-dependent enzymes. This is Octanoyl-[GcvH]:protein N-octanoyltransferase from Anoxybacillus flavithermus (strain DSM 21510 / WK1).